The following is a 534-amino-acid chain: Probable alpha-galactosidase A (534 aa).

A signal peptide spans 1–25 (MRLITRWIPLANALASTMPVQVVAS). C47 and C79 are oxidised to a cystine. Residues N50, N88, N94, and N124 are each glycosylated (N-linked (GlcNAc...) asparagine). Cysteines 127 and 157 form a disulfide. D155 serves as the catalytic Nucleophile. N-linked (GlcNAc...) asparagine glycosylation is present at N204. The Proton donor role is filled by D213. The region spanning 413–534 (CSQVIPTGLI…GLPAGVHVAL (122 aa)) is the Ricin B-type lectin domain. A disulfide bridge connects residues C430 and C443. A glycan (N-linked (GlcNAc...) asparagine) is linked at N444. An intrachain disulfide couples C468 to C481.

This sequence belongs to the glycosyl hydrolase 27 family.

The protein localises to the secreted. It catalyses the reaction Hydrolysis of terminal, non-reducing alpha-D-galactose residues in alpha-D-galactosides, including galactose oligosaccharides, galactomannans and galactolipids.. Hydrolyzes a variety of simple alpha-D-galactoside as well as more complex molecules such as oligosaccharides and polysaccharides. The sequence is that of Probable alpha-galactosidase A (aglA) from Aspergillus oryzae (strain ATCC 42149 / RIB 40) (Yellow koji mold).